Here is a 795-residue protein sequence, read N- to C-terminus: Phenylalanine--tRNA ligase beta subunit (795 aa).

The tRNA-binding domain occupies 39–148; that stretch reads AGSFHGVVVG…ADAPIGTDIR (110 aa). A B5 domain is found at 401–476; it reads PKRATITLRR…RVYGYNNIPD (76 aa). Residues Asp454, Asp460, Glu463, and Glu464 each contribute to the Mg(2+) site. An FDX-ACB domain is found at 701–794; that stretch reads SRFPANRRDI…LKERFQASLR (94 aa).

It belongs to the phenylalanyl-tRNA synthetase beta subunit family. Type 1 subfamily. Tetramer of two alpha and two beta subunits. The cofactor is Mg(2+).

Its subcellular location is the cytoplasm. The enzyme catalyses tRNA(Phe) + L-phenylalanine + ATP = L-phenylalanyl-tRNA(Phe) + AMP + diphosphate + H(+). This Shigella dysenteriae serotype 1 (strain Sd197) protein is Phenylalanine--tRNA ligase beta subunit.